Consider the following 192-residue polypeptide: Probable nicotinate-nucleotide adenylyltransferase (192 aa).

Belongs to the NadD family.

The catalysed reaction is nicotinate beta-D-ribonucleotide + ATP + H(+) = deamido-NAD(+) + diphosphate. The protein operates within cofactor biosynthesis; NAD(+) biosynthesis; deamido-NAD(+) from nicotinate D-ribonucleotide: step 1/1. Its function is as follows. Catalyzes the reversible adenylation of nicotinate mononucleotide (NaMN) to nicotinic acid adenine dinucleotide (NaAD). In Rhizobium leguminosarum bv. trifolii (strain WSM2304), this protein is Probable nicotinate-nucleotide adenylyltransferase.